Reading from the N-terminus, the 336-residue chain is Foldase protein PrsA (336 aa).

Residues 1–22 (MKSAKKLLSVLCLGIFILTFTA) form the signal peptide. C23 is lipidated: N-palmitoyl cysteine. C23 is lipidated: S-diacylglycerol cysteine. Positions 194–286 (PNTMNVSHIL…FGYHIIKINS (93 aa)) constitute a PpiC domain.

This sequence belongs to the PrsA family.

The protein localises to the cell membrane. The enzyme catalyses [protein]-peptidylproline (omega=180) = [protein]-peptidylproline (omega=0). Functionally, plays a major role in protein secretion by helping the post-translocational extracellular folding of several secreted proteins. This chain is Foldase protein PrsA, found in Clostridium botulinum (strain Okra / Type B1).